Here is a 757-residue protein sequence, read N- to C-terminus: Myb-related protein A (757 aa).

3 consecutive HTH myb-type domains span residues 30-81 (KKIC…QKVL), 82-137 (NPEL…NPEV), and 138-188 (KKSS…RRKV). DNA-binding regions (H-T-H motif) lie at residues 58–81 (WAFI…QKVL), 110–133 (WSLI…HNHL), and 161–184 (WAEI…NSTM). Positions 187–209 (KVEQEGYLQDGTKSSSERTGSST) are disordered. Residues 197–209 (GTKSSSERTGSST) show a composition bias toward polar residues. The interval 235–300 (IPVYQYASPE…RLSSQAGSLP (66 aa)) is transcriptional activation domain. The interval 303-558 (SGSFVMEDCV…IRRSLLGSTP (256 aa)) is negative regulatory domain.

As to quaternary structure, component of the DREAM complex. Expressed ubiquitously.

Its subcellular location is the nucleus. Functionally, strong transcriptional activator; DNA-binding protein that specifically recognize the sequence 5'-YAAC[GT]G-3'. Could have a role in the proliferation and/or differentiation of neurogenic, spermatogenic and B-lymphoid cells. In Gallus gallus (Chicken), this protein is Myb-related protein A (MYBL1).